Consider the following 410-residue polypeptide: MKHPIHVTSEIGELQTVLLKRPGKELENLTPDYLQQLLFDDIPYLPIVQKEHDYFAQTLRNRGVEVLYLETLAAEALTDKKLREEFVNRILKEGQADANVAHQTLKEYLLSFSNEELIQKIMGGVRKNEIDTSQKTHLYELMEDHYPFYLDPMPNLYFTRDPAATIGEGVTINKMREPARRRESLFIEYIMKYHPRFANHNVPVWLNRDYKFPIEGGDELILNEETVAIGVSARTSAKAIERLAKNLFSRQNKIKKVLAIEIPKCRAFMHLDTVFTMVDYDKFTIHPAIQGPKGNMNIYILEKGLDEETLKITHRTSLMEVLKEVLGLQELVLIPCGGGDVIASAREQWNDGSNTLAIAPGVVVTYDRNYVSNALLREHGIEVIEVLSSELSRGRGGPRCMSMPIVRKDI.

The Amidino-cysteine intermediate role is filled by C400.

This sequence belongs to the arginine deiminase family.

The protein resides in the cytoplasm. The enzyme catalyses L-arginine + H2O = L-citrulline + NH4(+). Its pathway is amino-acid degradation; L-arginine degradation via ADI pathway; carbamoyl phosphate from L-arginine: step 1/2. The sequence is that of Arginine deiminase from Bacillus cytotoxicus (strain DSM 22905 / CIP 110041 / 391-98 / NVH 391-98).